Consider the following 812-residue polypeptide: G patch domain-containing protein 1 homolog (812 aa).

A disordered region spans residues 1-42; that stretch reads MNRKKLAAYGQEFEDDDEEGSSVSKKPTQIHEEIATDEKGKR. Positions 29–40 are enriched in basic and acidic residues; that stretch reads QIHEEIATDEKG. Residues 145–191 enclose the G-patch domain; that stretch reads SNSIGVRMLRSMGWREGRGIGLANVKQKQKRGGESSEAQFDREQASK. Disordered stretches follow at residues 384 to 416 and 584 to 812; these read ANEV…FPDE and NEIE…EEKK. Over residues 586–609 the composition is skewed to basic and acidic residues; sequence IEMRERLLKSRAQRGAEEKKRNQS. Acidic residues-rich tracts occupy residues 610–630 and 653–668; these read DDDD…ENEA and DGAD…EEAE. A compositionally biased stretch (basic and acidic residues) spans 669–720; the sequence is EKERQEILKKREEDLKRRREIVEKKEEENRKRVEKELKELENRDLLRVSKQQ. The span at 761-794 shows a compositional bias: basic residues; it reads MKKKKKDKKEKEKKKKSKKSKKSKKEKKTKRKHS. Acidic residues predominate over residues 800 to 812; sequence DSGDNSDGWEEKK.

Belongs to the GPATCH1 family.

This Caenorhabditis elegans protein is G patch domain-containing protein 1 homolog.